An 875-amino-acid chain; its full sequence is Outer membrane usher protein FocD (875 aa).

The first 38 residues, 1–38 (MFFGDGGQLLSDKSLTGSAGGGNNRMKFNILPLAFFIG), serve as a signal peptide directing secretion. Cysteine 852 and cysteine 874 form a disulfide bridge.

It belongs to the fimbrial export usher family.

Its subcellular location is the cell outer membrane. In terms of biological role, involved in the export and assembly of the F1C fimbriae subunits across the outer membrane. This is Outer membrane usher protein FocD (focD) from Escherichia coli.